The sequence spans 218 residues: Adenylate kinase (218 aa).

10 to 15 serves as a coordination point for ATP; sequence GAGKGT. The interval 30-59 is NMP; it reads STGDMLRAAVKAGTPLGLEAKAIMDAGGLV. Residues Thr-31, Arg-36, 57–59, 85–88, and Gln-92 each bind AMP; these read GLV and GFPR. Positions 122–159 are LID; sequence GRRVHLASGRTYHVTFNPPKAAGKDDVTGEDLVQRDDD. ATP is bound by residues Arg-123 and 132–133; that span reads TY. The AMP site is built by Arg-156 and Arg-167. Arg-203 contacts ATP.

The protein belongs to the adenylate kinase family. As to quaternary structure, monomer.

It is found in the cytoplasm. It carries out the reaction AMP + ATP = 2 ADP. It participates in purine metabolism; AMP biosynthesis via salvage pathway; AMP from ADP: step 1/1. Catalyzes the reversible transfer of the terminal phosphate group between ATP and AMP. Plays an important role in cellular energy homeostasis and in adenine nucleotide metabolism. This Chromobacterium violaceum (strain ATCC 12472 / DSM 30191 / JCM 1249 / CCUG 213 / NBRC 12614 / NCIMB 9131 / NCTC 9757 / MK) protein is Adenylate kinase.